The chain runs to 377 residues: Cytoplasmic tRNA 2-thiolation protein 1 (377 aa).

This sequence belongs to the TtcA family. CTU1/NCS6/ATPBD3 subfamily.

It localises to the cytoplasm. The protein operates within tRNA modification; 5-methoxycarbonylmethyl-2-thiouridine-tRNA biosynthesis. In terms of biological role, plays a central role in 2-thiolation of mcm(5)S(2)U at tRNA wobble positions of tRNA(Lys), tRNA(Glu) and tRNA(Gln). Directly binds tRNAs and probably acts by catalyzing adenylation of tRNAs, an intermediate required for 2-thiolation. It is unclear whether it acts as a sulfurtransferase that transfers sulfur from thiocarboxylated URM1 onto the uridine of tRNAs at wobble position. Prior mcm(5) tRNA modification by the elongator complex is required for 2-thiolation. May also be involved in protein urmylation. This is Cytoplasmic tRNA 2-thiolation protein 1 from Debaryomyces hansenii (strain ATCC 36239 / CBS 767 / BCRC 21394 / JCM 1990 / NBRC 0083 / IGC 2968) (Yeast).